The sequence spans 455 residues: MGQLPKPSKISFGTDGLRGRVDTMLTPALALQVGYWCGRVLQAEGPVLIGMDSRSSGSMLVAALTAGLTASGREVWTLGLCPTPAVPGLIRRYSAAGGLMVSASHNPPEDNGIKVFGATGSKLSPERQQAIEAGLCGGDGSGMALAASGAARHRPELLDDYRASLLSSVGQHRLDGVPIVLDLCWGSATACGAEVFSALGADLTVLHGDPDGTRINVNCGSTHLEALRRAVIEKGAAMGFGFDGDADRMLAVDGQGRVVDGDHVLFLWGSVLQEQGQLPDQRLVATVMSNLGFERAWQARGGLLDRTPVGDQHVHAEMVRTGAALGGEQSGHILSSAHGLAGDGVLTALQIASLCHAQQLSLAEWVDQSFQAYPQKLVNVRVENRERRKGWADCAPLSSLVQEAEASMAEDGRVLVRASGTEPLLRVMVEAADQAVVDHWTSSLAAAAELHLNAS.

S104 functions as the Phosphoserine intermediate in the catalytic mechanism. Residues S104, D243, D245, and D247 each coordinate Mg(2+). A Phosphoserine modification is found at S104.

Belongs to the phosphohexose mutase family. Mg(2+) serves as cofactor. Post-translationally, activated by phosphorylation.

The catalysed reaction is alpha-D-glucosamine 1-phosphate = D-glucosamine 6-phosphate. Catalyzes the conversion of glucosamine-6-phosphate to glucosamine-1-phosphate. This chain is Phosphoglucosamine mutase, found in Synechococcus sp. (strain CC9311).